The sequence spans 310 residues: Major allergen Asp f 2 (310 aa).

The N-terminal stretch at 1–16 is a signal peptide; the sequence is MAALLRLAVLLPLAAP. 4 N-linked (GlcNAc...) asparagine glycosylation sites follow: asparagine 57, asparagine 87, asparagine 143, and asparagine 216. Positions 247–310 are disordered; that stretch reads AGESHGPDQG…THEGGQLHCT (64 aa). Positions 258-292 are enriched in low complexity; that stretch reads DTGSASAPASTSTSSSSSGSGSGATTTPTDSPSAT. Residues 300–310 show a composition bias toward basic and acidic residues; that stretch reads HTHEGGQLHCT.

Belongs to the ZPS1 family.

The protein localises to the secreted. In Aspergillus fumigatus (strain ATCC MYA-4609 / CBS 101355 / FGSC A1100 / Af293) (Neosartorya fumigata), this protein is Major allergen Asp f 2.